The chain runs to 127 residues: Translation initiation factor 5A (127 aa).

Lys-36 carries the hypusine modification.

This sequence belongs to the eIF-5A family.

The protein localises to the cytoplasm. Functions by promoting the formation of the first peptide bond. The protein is Translation initiation factor 5A (eif5a) of Halobacterium salinarum (strain ATCC 700922 / JCM 11081 / NRC-1) (Halobacterium halobium).